A 321-amino-acid polypeptide reads, in one-letter code: Glucokinase (321 aa).

8-13 (ADIGGT) is an ATP binding site.

Belongs to the bacterial glucokinase family.

The protein resides in the cytoplasm. It catalyses the reaction D-glucose + ATP = D-glucose 6-phosphate + ADP + H(+). The sequence is that of Glucokinase from Photorhabdus laumondii subsp. laumondii (strain DSM 15139 / CIP 105565 / TT01) (Photorhabdus luminescens subsp. laumondii).